A 1720-amino-acid polypeptide reads, in one-letter code: MDKQSASGEIPAMRWEPYHRRDPRNAKELSKTTSRGYFLDHLEDFDSQFFGISPKEAEQMDPQQRISLEVAWEALEDAGIPAKGLSGSDTAVFWGVNSDDYSKLVLEDLPNIEAWMGIGTAYCGIPNRISYHLNLMGPSTAVDAACASSLVAIHHGVQAIQLGESKIAIVGGVNALCGPGLTRVLDKAGAISSEGFCRSFDDEAKGYGRGEGAAAIILKNLSRAINDKDRILAVIKGSAVAQDGKTNGIMAPNAKAQQLVAQNALAVGNIDPLTVRYVEAHATSTPLGDPTEISAIAAVYGVGRDSQDPCFIGSIKPNIGHLEAGAGAMGFIKATLAIRKGILPPQANLNKLNSRIDWDKAGVKVVQEATKWPETDTIRRASICSYGYGGTVSHAVIEQFLPLSGLESLQTQSPDGPGVLLLSGPQQKRLSVQAETLRKWIAQDGRNHDLSSVLTTLATRRDHHDYRAAMVVESHDDAETALEALAKGADHPLVAQGRVLGTDIRKDVVWVFSGHGAQWTDMGKELLNNPVFYRAIQPLDELVQAEIGLSPIEMLLTGDFDSSDRVQILTYIMQIGISAVLKSNGVFPQAIIGHSVGEIAASVVAGALTPAEGALIVTRRAALYRRVMGQGGMILVNLPASQVEQELGQREDLVVAIESSPSSCVVAGDRDVVAQAAESFKERGVKTFTVKTDIAFHSPTLNGLIDPMLEALAEDLAPSTPTVRLFSTSLVDPRGQDLRDIHYWTNNMVNRVRLTSAVNAAVEEGYRIFLEVSSHPVVTHSINETLMDGGLEDFAVIPTLLRQKPTEKHILYSIAQLHCRGAEVDWKAQLPGPWADGLPTTTWMHKPIWRKIESAPLHTGLTHDVEKHTLLGQRIGIAGTNTTVYTTRLDNDTKPFPGSHPLHGTEIVPAAGLINTFMKGTGGRRLQNVVLRVPVAINAPRSVQVVVQEDQVKIMSRLLSDTPQATEDDSSWATHTTAYWARDIQEAVDPIDIAAVKKRLGTRIRDDFSINYLDQVGVSAMGFPWAITEHYHKDKEMIARVDVNPAVTGDAPLPWDSSSWAPILDAATSVGSTVFGTPALRMPAQIDRVDIFTSQDPPKIGWLYVEDASDAAPTSHVSVLNEAGEVVAKFTAMRFSEIEGTPGVSGSMESLVHQLAWPPATPAEEPLSIDTVLLVSSDAATMRQYANTIPRGVRSFEFSSVQDLISQDKSGLRLDKGTAVAYIPGEVQSLEEIPAASESFTWEVLELVKYIVKGGLPLKAFILTSNVGSGETPTALAQAPLFGLARIIASEHPDLGCLIDSENPVFPLTAMRYIQGADVIRINDDVARTARLRSLPRNKLHPASQPPRLLPRSEGTYLITGGLGVLGLETADFLVENGARRLILISRRALPPRRTWDAAPSDLQPTLAKIRNLESRGATVHILPLDISHPAAATQLSTALDTLSLPPVLGVVHAAGVLDNQLILETTRDAFTRVLAPKIAGALALHAVFPPNTLDFFLLFSSCGNLFGFPGQASYGAGNAFLDTLATHRARLGDAAVAVQWTSWRGMGMGASTEFINAELESKGITDVTRDEAFGAWLHLARYDIDHGVVLRSLAFDEGEPLPVSILTDIAVRRVGVAAAGDVPGTAAAGGADAIPSSGPELKVYLDEKIRGCVAKVLQMGAEDVDSKAALADLGVDSVMTVSLRRQLQQTLKVKVPSTLTWSHPTVSHLVGWFAEKVGK.

The tract at residues 1 to 31 is disordered; that stretch reads MDKQSASGEIPAMRWEPYHRRDPRNAKELSK. A Ketosynthase family 3 (KS3) domain is found at 1–399; sequence MDKQSASGEI…GTVSHAVIEQ (399 aa). The span at 16 to 30 shows a compositional bias: basic and acidic residues; it reads EPYHRRDPRNAKELS. Catalysis depends on for beta-ketoacyl synthase activity residues cysteine 146, histidine 281, and histidine 321. Residues 509 to 823 form a malonyl-CoA:ACP transacylase (MAT) domain region; that stretch reads VWVFSGHGAQ…IAQLHCRGAE (315 aa). Residues 868-987 form an N-terminal hotdog fold region; sequence HTLLGQRIGI…AYWARDIQEA (120 aa). The interval 868–1139 is dehydratase (DH) domain; the sequence is HTLLGQRIGI…FTAMRFSEIE (272 aa). The region spanning 868 to 1144 is the PKS/mFAS DH domain; that stretch reads HTLLGQRIGI…FSEIEGTPGV (277 aa). Histidine 900 serves as the catalytic Proton acceptor; for dehydratase activity. The segment at 1001-1144 is C-terminal hotdog fold; that stretch reads GTRIRDDFSI…FSEIEGTPGV (144 aa). Aspartate 1065 acts as the Proton donor; for dehydratase activity in catalysis. The interval 1148–1545 is product template (PT) domain; the sequence is MESLVHQLAW…AVAVQWTSWR (398 aa). In terms of domain architecture, Carrier spans 1644–1718; the sequence is VYLDEKIRGC…HLVGWFAEKV (75 aa). At serine 1678 the chain carries O-(pantetheine 4'-phosphoryl)serine.

Its subcellular location is the cytoplasm. It localises to the cytosol. The enzyme catalyses 3 malonyl-CoA + acetyl-CoA + NADPH + 3 H(+) = 6-methylsalicylate + 3 CO2 + NADP(+) + 4 CoA + H2O. It functions in the pathway mycotoxin biosynthesis; patulin biosynthesis. Functionally, 6-methylsalicylic acid synthase; part of the gene cluster that mediates the biosynthesis of patulin, an acetate-derived tetraketide mycotoxin produced by several fungal species that shows antimicrobial properties against several bacteria. PatK catalyzes the first step of the pathway which is the synthesis of 6-methylsalicylic acid via condensation of 1 acetate and 3 malonate units. The pathway begins with the synthesis of 6-methylsalicylic acid by the polyketide synthase (PKS) patK via condensation of acetate and malonate units. The 6-methylsalicylic acid decarboxylase patG then catalyzes the decarboxylation of 6-methylsalicylic acid to yield m-cresol (also known as 3-methylphenol). These first reactions occur in the cytosol. The intermediate m-cresol is then transported into the endoplasmic reticulum where the cytochrome P450 monooxygenase patH converts it to m-hydroxybenzyl alcohol, which is further converted to gentisyl alcohol by the cytochrome P450 monooxygenase patI. The oxidoreductases patJ and patO further convert gentisyl alcohol to isoepoxydon in the vacuole. PatN catalyzes then the transformation of isoepoxydon into phyllostine. The cluster protein patF is responsible for the conversion from phyllostine to neopatulin whereas the alcohol dehydrogenase patD converts neopatulin to E-ascladiol. The steps between isoepoxydon and E-ascladiol occur in the cytosol, and E-ascladiol is probably secreted to the extracellular space by one of the cluster-specific transporters patC or patM. Finally, the secreted patulin synthase patE catalyzes the conversion of E-ascladiol to patulin. The chain is 6-methylcalicylic acide synthase from Aspergillus clavatus (strain ATCC 1007 / CBS 513.65 / DSM 816 / NCTC 3887 / NRRL 1 / QM 1276 / 107).